Consider the following 493-residue polypeptide: MKIYFKKNYLPSMDVDTAVVLQVEKYENSFGLEAVDPKGVAKKSFLRENFKGVFGTQVKLLYPEGSPVACLQVMGLGKQEEINDQTFLKTGGLCFPQLNKANKVVVFADALGIENQTSQVMHFALGLLLRSYSFKHYHTQKTKNEKNLEITFITENAELCQKEFDDVKAILGGVNLTKELVNEPANILGTNEFVERTQQLQTLGVEVEVLNKETLEKLGMNALLGVAQGSQRPPYLVVMKWLGGNENEKPVAFVGKGVVFDTGGISLKPSNKMEDMKGDMAGAATVVGLMHALAARKAKVNVLGVIGLVENMPGSNAQRPGDIVTSMSGQTIEVINTDAEGRLVLADALWYCKTKLQPKMIIDLATLTGAIVVALGYEYAGLFSNNKELVKQLVHSGEVTEEKVWQFPLGPEYDRLVDGKFADISNCPVGYGAGSITAAQFLKRFVGDDIPWAHIDIAGVASGKKKNEFNSSWASGFGVRLLNHLVKDYYENK.

2 residues coordinate Mn(2+): lysine 256 and aspartate 261. Lysine 268 is an active-site residue. Residues aspartate 279, aspartate 338, and glutamate 340 each coordinate Mn(2+). Arginine 342 is a catalytic residue.

It belongs to the peptidase M17 family. Mn(2+) is required as a cofactor.

It is found in the cytoplasm. The enzyme catalyses Release of an N-terminal amino acid, Xaa-|-Yaa-, in which Xaa is preferably Leu, but may be other amino acids including Pro although not Arg or Lys, and Yaa may be Pro. Amino acid amides and methyl esters are also readily hydrolyzed, but rates on arylamides are exceedingly low.. The catalysed reaction is Release of an N-terminal amino acid, preferentially leucine, but not glutamic or aspartic acids.. In terms of biological role, presumably involved in the processing and regular turnover of intracellular proteins. Catalyzes the removal of unsubstituted N-terminal amino acids from various peptides. This Phytoplasma australiense protein is Probable cytosol aminopeptidase.